Consider the following 104-residue polypeptide: Naphthalene 1,2-dioxygenase system, ferredoxin component (104 aa).

The Rieske domain maps to Ile6–Ile101. [2Fe-2S] cluster-binding residues include Cys45, His47, Cys64, and His67.

The protein belongs to the bacterial ring-hydroxylating dioxygenase ferredoxin component family. The naphthalene dioxygenase (NDO) multicomponent enzyme system is composed of an electron transfer component and a dioxygenase component (iron sulfur protein (ISP)). The electron transfer component is composed of a ferredoxin reductase (NdoR) and a ferredoxin (NdoA), and the dioxygenase component is formed of a heterohexamer (trimer of heterodimers) of three large alpha subunits (NdoB) and three small beta subunits (NdoC). Requires [2Fe-2S] cluster as cofactor.

Its pathway is aromatic compound metabolism; naphthalene degradation. Its function is as follows. Component of the naphthalene dioxygenase (NDO) multicomponent enzyme system which catalyzes the incorporation of both atoms of molecular oxygen into naphthalene to form cis-(1R,2S)-dihydroxy-1,2-dihydronaphthalene. Functions as an intermediate electron transfer protein via a specific interaction with iron sulfur protein components (ISP) (NdoB and NdoC). The polypeptide is Naphthalene 1,2-dioxygenase system, ferredoxin component (Pseudomonas aeruginosa).